The primary structure comprises 106 residues: ATP-dependent Clp protease adapter protein ClpS (106 aa).

This sequence belongs to the ClpS family. As to quaternary structure, binds to the N-terminal domain of the chaperone ClpA.

Functionally, involved in the modulation of the specificity of the ClpAP-mediated ATP-dependent protein degradation. The sequence is that of ATP-dependent Clp protease adapter protein ClpS from Vibrio atlanticus (strain LGP32) (Vibrio splendidus (strain Mel32)).